The following is an 869-amino-acid chain: Mismatch repair endonuclease PMS2 (869 aa).

ATP is bound by residues Asn44, Asp69, Glu108, Ala109, and Leu110. A Nuclear localization signal motif is present at residues 585–588 (RRFK).

It belongs to the DNA mismatch repair MutL/HexB family.

Its subcellular location is the nucleus. The catalysed reaction is ATP + H2O = ADP + phosphate + H(+). Component of the post-replicative DNA mismatch repair system (MMR). Involved in B cell growth by positively regulating B cell proliferation and controlling replication efficiency. Controls cell cycle to prevent re-replication and defects in DNA damage-induced G2 checkpoint. Doesn't seem to counteract or control the immunoglobulin gene conversion (Ig GC) and to contribute to guanine/uracil mismatch repair. Possesses an ATPase activity, but in the absence of gross structural changes, ATP hydrolysis may not be necessary for proficient mismatch repair. The polypeptide is Mismatch repair endonuclease PMS2 (Gallus gallus (Chicken)).